The following is a 273-amino-acid chain: Shikimate dehydrogenase (NADP(+)) (273 aa).

Shikimate is bound by residues 15–17 (SLS) and threonine 62. The Proton acceptor role is filled by lysine 66. Position 78 (glutamate 78) interacts with NADP(+). 2 residues coordinate shikimate: asparagine 87 and aspartate 102. NADP(+) is bound by residues 126–130 (GAGGA), 149–154 (NRTPER), isoleucine 215, and glycine 238.

This sequence belongs to the shikimate dehydrogenase family. As to quaternary structure, homodimer.

It catalyses the reaction shikimate + NADP(+) = 3-dehydroshikimate + NADPH + H(+). It functions in the pathway metabolic intermediate biosynthesis; chorismate biosynthesis; chorismate from D-erythrose 4-phosphate and phosphoenolpyruvate: step 4/7. Its function is as follows. Involved in the biosynthesis of the chorismate, which leads to the biosynthesis of aromatic amino acids. Catalyzes the reversible NADPH linked reduction of 3-dehydroshikimate (DHSA) to yield shikimate (SA). This Desulfitobacterium hafniense (strain Y51) protein is Shikimate dehydrogenase (NADP(+)).